Here is a 403-residue protein sequence, read N- to C-terminus: Large ribosomal subunit protein uL3 (403 aa).

The tract at residues 1–37 (MSHRKFSAPRHGSLGFLPRKRSSRHRGKVKSFPKDDP) is disordered. Ser-13 is subject to Phosphoserine. Residues 18 to 31 (PRKRSSRHRGKVKS) show a composition bias toward basic residues. Residue Lys-39 forms a Glycyl lysine isopeptide (Lys-Gly) (interchain with G-Cter in SUMO2) linkage. Lys-136 is modified (N6-acetyllysine). Residues Lys-224 and Lys-226 each participate in a glycyl lysine isopeptide (Lys-Gly) (interchain with G-Cter in SUMO2) cross-link. Residue His-245 is modified to Tele-methylhistidine. N6-acetyllysine; alternate is present on residues Lys-286 and Lys-294. Lys-286 is covalently cross-linked (Glycyl lysine isopeptide (Lys-Gly) (interchain with G-Cter in SUMO2); alternate). Residue Lys-294 forms a Glycyl lysine isopeptide (Lys-Gly) (interchain with G-Cter in SUMO1); alternate linkage. The residue at position 304 (Ser-304) is a Phosphoserine. The residue at position 366 (Lys-366) is an N6-acetyllysine; alternate. A Glycyl lysine isopeptide (Lys-Gly) (interchain with G-Cter in SUMO2); alternate cross-link involves residue Lys-366. Lys-373 carries the post-translational modification N6-acetyllysine. Glycyl lysine isopeptide (Lys-Gly) (interchain with G-Cter in SUMO2) cross-links involve residues Lys-386, Lys-393, and Lys-399.

The protein belongs to the universal ribosomal protein uL3 family. In terms of assembly, component of the large ribosomal subunit. Interacts with DHX33. In terms of processing, constitutively monomethylated at His-245 by METTL18. Methylation at His-245 regulates translation elongation by slowing ribosome traversal on tyrosine codons: slower elongation provides enough time for proper folding of synthesized proteins and prevents cellular aggregation of tyrosine-rich proteins. It is not required for incorporation of RPL3 into ribosomes.

The protein localises to the nucleus. It is found in the nucleolus. It localises to the cytoplasm. Its function is as follows. Component of the large ribosomal subunit. The ribosome is a large ribonucleoprotein complex responsible for the synthesis of proteins in the cell. The sequence is that of Large ribosomal subunit protein uL3 (Rpl3) from Rattus norvegicus (Rat).